We begin with the raw amino-acid sequence, 423 residues long: NADP-specific glutamate dehydrogenase (423 aa).

Lys112 is a catalytic residue.

It belongs to the Glu/Leu/Phe/Val dehydrogenases family. Homohexamer.

The catalysed reaction is L-glutamate + NADP(+) + H2O = 2-oxoglutarate + NH4(+) + NADPH + H(+). The chain is NADP-specific glutamate dehydrogenase (gdhA) from Saccharolobus shibatae (strain ATCC 51178 / DSM 5389 / JCM 8931 / NBRC 15437 / B12) (Sulfolobus shibatae).